A 417-amino-acid polypeptide reads, in one-letter code: Inactive cytochrome P450 76AD1 (417 aa).

The helical transmembrane segment at alanine 4–phenylalanine 24 threads the bilayer.

The protein belongs to the cytochrome P450 family.

Its subcellular location is the membrane. The protein operates within pigment biosynthesis; betalain biosynthesis. Its function is as follows. Inactive cytochrome unable to convert L-DOPA to cyclo-DOPA in the betalain pathway and producing a yellow mutant phenotype. A frameshift replaces 108 amino acids of the active protein found in red beets (AC I3PFJ5) with 27 new residues followed by a stop codon. The polypeptide is Inactive cytochrome P450 76AD1 (Beta vulgaris (Sugar beet)).